The sequence spans 185 residues: Photosystem I assembly protein Ycf4 (185 aa).

Transmembrane regions (helical) follow at residues 24–44 (YIIG…SISS) and 58–78 (ALLF…ANLL).

This sequence belongs to the Ycf4 family.

It localises to the cellular thylakoid membrane. Its function is as follows. Seems to be required for the assembly of the photosystem I complex. The polypeptide is Photosystem I assembly protein Ycf4 (Prochlorococcus marinus (strain MIT 9215)).